The sequence spans 240 residues: RNA-free ribonuclease P (240 aa).

This sequence belongs to the HARP family.

It catalyses the reaction Endonucleolytic cleavage of RNA, removing 5'-extranucleotides from tRNA precursor.. Its function is as follows. RNA-free RNase P that catalyzes the removal of the 5'-leader sequence from pre-tRNA to produce the mature 5'-terminus. This chain is RNA-free ribonuclease P, found in Methanococcus aeolicus (strain ATCC BAA-1280 / DSM 17508 / OCM 812 / Nankai-3).